A 743-amino-acid chain; its full sequence is MRRSHLLATVACATLACAPLAANAQFAPAGSGGSPTSSVPGPGNGSGNSFEPTENTPAAKSRFSGPSPYAPQAPGVNAANLPDIGSMDPNDVPQMAPQQSASPASGDWAAYGHDDSQMRYSPLSEITPQNADQLKVAFVYHTGSYPRPGQTNKWAAETTPIKVGDGLYMCSAQNDIMKIDPATGKEIWRHNINEKYEAIPYTAACKGVTYFTSSQVPEGQPCHNRILEGTLDMRLIAVDAATGNLCEGFGNGGQVNLMQGLGESVPGFVSMTTPPPVVNGVVVVNHEVLDGQRRWAPSGVIRGYDAESGKFLWAWDVNRPNDHSQPTGNNHYSRGTPNSWAAMTGDNALGLVYVPTGNSASDYYSALRSPEENKVSSAVVALDVKTGSPRWVFQTVHKDVWDYDIGSQATLMDMPGQDGQPVPALIMPTKRGQTFVLDRRDGKPILPVEERPAPSPGVIPGDPRSPTQPWSTGMPALRVPDLKETDMWGMSPIDQLFCRIKFRRANYTGEFTPPSVDKPWIEYPGYNGGSDWGSVSYDPQSGILIANWNITPMYDQLVTRKKADELGLMPIDDPNYKPGGGGAEGNGAMDGTPYGIVVTPFWDQYTGMMCNRPPYGMITAIDMKHGQKVLWQHPLGTARANGPWGLPTGLPWEIGTPNNGGSVVTAGGVVFIAAATDNQIRAIDEHTGKVVWSAVLPGGGQANPMTYEANGHQYVAIMAGGHHFMMTPVSDQLVVYALPDHKG.

The N-terminal stretch at 1 to 24 (MRRSHLLATVACATLACAPLAANA) is a signal peptide. Low complexity predominate over residues 27 to 41 (APAGSGGSPTSSVPG). 2 disordered regions span residues 27 to 115 (APAG…GHDD) and 445 to 474 (ILPV…STGM).

It belongs to the bacterial PQQ dehydrogenase family. It depends on pyrroloquinoline quinone as a cofactor.

The protein localises to the secreted. It carries out the reaction glycerol + A = dihydroxyacetone + AH2. Catalyzes the oxidation of glycerol to glycerone. Also acts, more slowly, on a number of other polyols including D-sorbitol, D-arabinitol, D-mannitol, meso-erythritol, adonitol and propylene glycol. The sequence is that of Glycerol dehydrogenase large subunit (sldA) from Gluconobacter oxydans (strain 621H) (Gluconobacter suboxydans).